The following is a 1005-amino-acid chain: uncharacterized protein (1005 aa).

The signal sequence occupies residues 1 to 24; the sequence is MKFQRKYWGLLSTLGVSSAVALSA. Cys-25 is lipidated: N-palmitoyl cysteine. Cys-25 carries S-diacylglycerol cysteine lipidation. Disordered stretches follow at residues 105–165 and 786–825; these read KKDK…EEKF and TQKI…WDDV. 2 stretches are compositionally biased toward low complexity: residues 110–131 and 145–156; these read TSSQ…TSTS and QSSSNGQNNQQS. Polar residues predominate over residues 786 to 801; it reads TQKIDQQNTASTTSDV.

The protein localises to the cell membrane. This is an uncharacterized protein from Mycoplasma pneumoniae (strain ATCC 29342 / M129 / Subtype 1) (Mycoplasmoides pneumoniae).